A 605-amino-acid chain; its full sequence is Alpha-1,3-galactosidase A (605 aa).

The N-terminal stretch at 1 to 20 (MKKYLHILPACFLFYAAAHA) is a signal peptide. PbH1 repeat units lie at residues 256 to 278 (SKNITLSRLQMHYMHGLGIVSQY), 312 to 334 (KGKVIIDSCYFAGAQDDPVNVHG), 421 to 443 (TPEVEIRNSYFTRTSTRGTLVTT), 444 to 466 (PRKVVIENNTYYKTGMSAILIEA), 477 to 507 (VKDVLIKGNTFIDCAYNGGPGHAVIAIHPSN), and 517 to 547 (HQNIRIEDNTFRTFDYPVLYAKSTAGLLFRN).

This sequence belongs to the glycosyl hydrolase 110 family. A subfamily.

The catalysed reaction is Hydrolysis of terminal, non-reducing branched (1-&gt;3)-alpha-D-galactosidic residues, producing free D-galactose.. It catalyses the reaction Hydrolysis of terminal, non-reducing alpha-D-galactose residues in alpha-D-galactosides, including galactose oligosaccharides, galactomannans and galactolipids.. In terms of biological role, alpha-galactosidase that specifically removes branched alpha-1,3-linked galactose residues present in blood group B antigens. Has no activity toward linear alpha-1,3-linked galactose residues. This is Alpha-1,3-galactosidase A (glaA) from Bacteroides fragilis (strain YCH46).